The following is a 213-amino-acid chain: Octanoyltransferase (213 aa).

Positions 32–207 (ENTPDEIWLV…NILALLNNPP (176 aa)) constitute a BPL/LPL catalytic domain. Substrate contacts are provided by residues 71-78 (RGGQVTYH), 138-140 (SLG), and 151-153 (GLA). The active-site Acyl-thioester intermediate is Cys-169.

The protein belongs to the LipB family.

Its subcellular location is the cytoplasm. The catalysed reaction is octanoyl-[ACP] + L-lysyl-[protein] = N(6)-octanoyl-L-lysyl-[protein] + holo-[ACP] + H(+). It functions in the pathway protein modification; protein lipoylation via endogenous pathway; protein N(6)-(lipoyl)lysine from octanoyl-[acyl-carrier-protein]: step 1/2. Its function is as follows. Catalyzes the transfer of endogenously produced octanoic acid from octanoyl-acyl-carrier-protein onto the lipoyl domains of lipoate-dependent enzymes. Lipoyl-ACP can also act as a substrate although octanoyl-ACP is likely to be the physiological substrate. The polypeptide is Octanoyltransferase (Citrobacter koseri (strain ATCC BAA-895 / CDC 4225-83 / SGSC4696)).